The primary structure comprises 545 residues: Sphingosine-1-phosphate lyase (545 aa).

Residues M1–P26 are Lumenal-facing. The helical; Signal-anchor for type III membrane protein transmembrane segment at W27 to I47 threads the bilayer. The Cytoplasmic portion of the chain corresponds to C48–K545. K342 carries the N6-(pyridoxal phosphate)lysine modification.

The protein belongs to the group II decarboxylase family. Sphingosine-1-phosphate lyase subfamily. Requires pyridoxal 5'-phosphate as cofactor. In terms of tissue distribution, localized to the developing gut primordium during embryogenesis.

The protein resides in the endoplasmic reticulum membrane. It carries out the reaction sphinganine 1-phosphate = hexadecanal + phosphoethanolamine. The protein operates within lipid metabolism; sphingolipid metabolism. Its function is as follows. Cleaves phosphorylated sphingoid bases (PSBs), such as sphingosine-1-phosphate, into fatty aldehydes and phosphoethanolamine. Sphingolipid catabolism is required for normal development including viability, reproduction and muscle development. This is Sphingosine-1-phosphate lyase from Drosophila melanogaster (Fruit fly).